The sequence spans 1226 residues: Chitin synthase IV (1226 aa).

Residues 1–205 (MSLPERPGGS…SRKNPATAEQ (205 aa)) are disordered. The segment covering 49–65 (SVSSYAETISNPHANTE) has biased composition (polar residues). Residues 66–75 (TLPLSPTHPT) show a composition bias toward low complexity. Positions 94–107 (IRPERNRIDKDHRN) are enriched in basic and acidic residues. The segment covering 134–151 (DVSTEPSGGSQTHGSFAD) has biased composition (polar residues). Over residues 163–172 (MSGDDQEKGN) the composition is skewed to basic and acidic residues. Residues 173–198 (TRVKSRPRRSKSGKITKETRHRKSRK) show a composition bias toward basic residues. The helical transmembrane segment at 246 to 266 (MGLISIILVIMAIVGFLTFGF) threads the bilayer. N-linked (GlcNAc...) asparagine glycans are attached at residues Asn-381, Asn-421, and Asn-443. The helical transmembrane segment at 516-536 (ILILSVVGTRFVLALIFQWFI) threads the bilayer. The tract at residues 572–671 (LPGDVGSSAM…PGPAGFIHDS (100 aa)) is disordered. 2 stretches are compositionally biased toward polar residues: residues 580-601 (AMGSSDRTSKRGSSFLPTTSRF) and 618-643 (TTMSSQGPASALLNPNSIYRQGNDSR). The N-linked (GlcNAc...) asparagine glycan is linked to Asn-640. Over residues 649–666 (PDPYSSAASPSDGPGPAG) the composition is skewed to low complexity. Asn-787 and Asn-1035 each carry an N-linked (GlcNAc...) asparagine glycan. Transmembrane regions (helical) follow at residues 1060 to 1080 (FVVFVELVGTLVLPAAIAFTF), 1094 to 1114 (IIPLVLLALILGLPGLLILVT), and 1118 to 1138 (WSYVVWMLIYLVSLPIWNFVL).

This sequence belongs to the chitin synthase family. Class IV subfamily. As to expression, highly expressed in conidia.

The protein resides in the cell membrane. The enzyme catalyses [(1-&gt;4)-N-acetyl-beta-D-glucosaminyl](n) + UDP-N-acetyl-alpha-D-glucosamine = [(1-&gt;4)-N-acetyl-beta-D-glucosaminyl](n+1) + UDP + H(+). Polymerizes chitin, a structural polymer of the cell wall and septum, by transferring the sugar moiety of UDP-GlcNAc to the non-reducing end of the growing chitin polymer. Contributes to the production of conidia and the ability of fungal conidia to germinate. Involved in fungal stress tolerances. The chain is Chitin synthase IV from Metarhizium acridum (strain CQMa 102).